The primary structure comprises 189 residues: Ornithine decarboxylase antizyme 2 (189 aa).

Residue Ser-186 is modified to Phosphoserine.

The protein belongs to the ODC antizyme family. As to quaternary structure, interacts with ODC1 and thereby sterically blocks ODC homodimerization. Interacts with AZIN2; this interaction disrupts the interaction between the antizyme and ODC1.

It is found in the nucleus. Functionally, ornithine decarboxylase (ODC) antizyme protein that negatively regulates ODC activity and intracellular polyamine biosynthesis and uptake in response to increased intracellular polyamine levels. Binds to ODC monomers, inhibiting the assembly of the functional ODC homodimers. Does not target the ODC monomers for degradation, which allows a protein synthesis-independent restoration of ODC activity. Involved in the translocation of AZIN2 from ER-Golgi intermediate compartment (ERGIC) to the cytosol. This Mus musculus (Mouse) protein is Ornithine decarboxylase antizyme 2 (Oaz2).